The chain runs to 565 residues: Wee1-like protein kinase 2 (565 aa).

A Protein kinase domain is found at 217-493 (FLELERIGVG…TKHPILRPSL (277 aa)). ATP is bound by residues 223–231 (IGVGEFGSV) and lysine 246. The Proton acceptor role is filled by aspartate 344. Residues asparagine 349 and aspartate 383 each contribute to the Mg(2+) site. A coiled-coil region spans residues 496–522 (AVQLQKQLNVEKCKTAMLERELKAARL). Residues 531-553 (PLGNANLQESETSPKKNNKRLVG) form a disordered region.

The protein belongs to the protein kinase superfamily. Ser/Thr protein kinase family. WEE1 subfamily.

The protein localises to the nucleus. The enzyme catalyses L-tyrosyl-[protein] + ATP = O-phospho-L-tyrosyl-[protein] + ADP + H(+). In terms of biological role, oocyte-specific protein tyrosine kinase that phosphorylates and inhibits CDK1 and acts as a key regulator of meiosis. Required to maintain meiotic arrest in oocytes by phosphorylating CDK1 at 'Tyr-15', leading to inhibit CDK1 activity and prevent meiotic reentry. The polypeptide is Wee1-like protein kinase 2 (WEE2) (Gallus gallus (Chicken)).